We begin with the raw amino-acid sequence, 1261 residues long: MIAHKQKKTKKKRAWASGQLSTDITTSEMGLKSLSSNSIFDPDYIKELVNDIRKFSHMLLYLKEAIFSDCFKEVIHIRLEELLRVLKSIMNKHQNLNSVDLQNAAEMLTAKVKAVNFTEVNEENKNDLFQEVFSSIETLAFTFGNILTNFLMGDVGNDSLLRLPVSRETKSFENVSVESVDSSSEKGNFSPLELDNVLLKNTDSIELALSYAKTWSKYTKNIVSWVEKKLNLELESTRNMVKLAEATRTNIGIQEFMPLQSLFTNALLNDIESSHLLQQTIAALQANKFVQPLLGRKNEMEKQRKEIKELWKQEQNKMLEAENALKKAKLLCMQRQDEYEKAKSSMFRAEEEHLSSSGGLAKNLNKQLEKKRRLEEEALQKVEEANELYKVCVTNVEERRNDLENTKREILAQLRTLVFQCDLTLKAVTVNLFHMQHLQAASLADSLQSLCDSAKLYDPGQEYSEFVKATNSTEEEKVDGNVNKHLNSSQPSGFGPANSLEDVVRLPDSSNKIEEDRCSNSADITGPSFIRSWTFGMFSDSESTGGSSESRSLDSESISPGDFHRKLPRTPSSGTMSSADDLDEREPPSPSETGPNSLGTFKKTLMSKAALTHKFRKLRSPTKCRDCEGIVVFQGVECEECLLVCHRKCLENLVIICGHQKLPGKIHLFGAEFTQVAKKEPDGIPFILKICASEIENRALCLQGIYRVCGNKIKTEKLCQALENGMHLVDISEFSSHDICDVLKLYLRQLPEPFILFRLYKEFIDLAKEIQHVNEEQETKKNSLEDKKWPNMCIEINRILLKSKDLLRQLPASNFNSLHFLIVHLKRVVDHAEENKMNSKNLGVIFGPSLIRPRPTTAPITISSLAEYSNQARLVEFLITYSQKIFDGSLQPQDVMCSIGVVDQGCFPKPLLSPEERDIERSMKSLFFSSKEDIHTSESESKIFERATSFEESERKQNALGKCDACLSDKAQLLLDQEAESASQKIEDGKTPKPLSLKSDRSTNNVERHTPRTKIRPVSLPVDRLLLASPPNERNGRNMGNVNLDKFCKNPAFEGVNRKDAATTVCSKFNGFDQQTLQKIQDKQYEQNSLTAKTTMIMPSALQEKGVTTSLQISGDHSINATQPSKPYAEPVRSVREASERRSSDSYPLAPVRAPRTLQPQHWTTFYKPHAPIISIRGNEEKPASPSAAVPPGTDHDPHGLVVKSMPDPDKASACPGQATGQPKEDSEELGLPDVNPMCQRPRLKRMQQFEDLEGEIPQFV.

Phosphoserine is present on residues Ser-171, Ser-176, Ser-179, and Ser-190. The F-BAR domain maps to 192-462; that stretch reads LELDNVLLKN…SAKLYDPGQE (271 aa). The stretch at 296 to 418 forms a coiled coil; that stretch reads RKNEMEKQRK…EILAQLRTLV (123 aa). The interval 481–501 is disordered; that stretch reads NVNKHLNSSQPSGFGPANSLE. Residues Ser-499, Ser-519, and Ser-552 each carry the phosphoserine modification. Residues 541-559 show a composition bias toward low complexity; that stretch reads SESTGGSSESRSLDSESIS. Residues 541–600 are disordered; that stretch reads SESTGGSSESRSLDSESISPGDFHRKLPRTPSSGTMSSADDLDEREPPSPSETGPNSLGT. The segment at 612 to 657 adopts a Phorbol-ester/DAG-type zinc-finger fold; sequence THKFRKLRSPTKCRDCEGIVVFQGVECEECLLVCHRKCLENLVIIC. The Rho-GAP domain maps to 671 to 886; that stretch reads AEFTQVAKKE…FLITYSQKIF (216 aa). Phosphoserine is present on residues Ser-913 and Ser-949. Residues 981 to 1011 are disordered; the sequence is SASQKIEDGKTPKPLSLKSDRSTNNVERHTP. A compositionally biased stretch (basic and acidic residues) spans 998–1010; it reads KSDRSTNNVERHT. A phosphoserine mark is found at Ser-1019, Ser-1144, and Ser-1146. Disordered regions lie at residues 1117–1153 and 1178–1238; these read HSIN…APVR and GNEE…VNPM. Positions 1133–1144 are enriched in basic and acidic residues; the sequence is RSVREASERRSS. The tract at residues 1258–1261 is interaction with PTPN13/PTPL1; the sequence is PQFV.

In terms of assembly, interacts with PTPN13/PTPL1. Interacts with RAP2A via its coiled coil domain. Interacts with RASIP1. As to expression, widely expressed. Highly expressed in skeletal muscle and heart. Expressed at intermediate level in placenta, liver and pancreas. Weakly expressed in brain, lung and kidney.

Functionally, GTPase activator for the Rho-type GTPases by converting them to an inactive GDP-bound state. Has strong activity toward RHOA, and weaker activity toward RAC1 and CDC42. May act as a specific effector of RAP2A to regulate Rho. In concert with RASIP1, suppresses RhoA signaling and dampens ROCK and MYH9 activities in endothelial cells and plays an essential role in blood vessel tubulogenesis. The sequence is that of Rho GTPase-activating protein 29 (ARHGAP29) from Homo sapiens (Human).